A 40-amino-acid polypeptide reads, in one-letter code: Photosystem II reaction center protein J (40 aa).

A helical membrane pass occupies residues 8-28 (IPLWVVATIAGLGVITVVGIF).

This sequence belongs to the PsbJ family. PSII is composed of 1 copy each of membrane proteins PsbA, PsbB, PsbC, PsbD, PsbE, PsbF, PsbH, PsbI, PsbJ, PsbK, PsbL, PsbM, PsbT, PsbX, PsbY, PsbZ, Psb30/Ycf12, peripheral proteins PsbO, CyanoQ (PsbQ), PsbU, PsbV and a large number of cofactors. It forms dimeric complexes.

It is found in the cellular thylakoid membrane. One of the components of the core complex of photosystem II (PSII). PSII is a light-driven water:plastoquinone oxidoreductase that uses light energy to abstract electrons from H(2)O, generating O(2) and a proton gradient subsequently used for ATP formation. It consists of a core antenna complex that captures photons, and an electron transfer chain that converts photonic excitation into a charge separation. The chain is Photosystem II reaction center protein J from Trichormus variabilis (strain ATCC 29413 / PCC 7937) (Anabaena variabilis).